A 232-amino-acid polypeptide reads, in one-letter code: Orotidine 5'-phosphate decarboxylase (232 aa).

Substrate contacts are provided by residues aspartate 13, lysine 35, 62 to 71 (DLKFHDIPNT), threonine 122, arginine 182, glutamine 191, glycine 211, and arginine 212. Lysine 64 (proton donor) is an active-site residue.

This sequence belongs to the OMP decarboxylase family. Type 1 subfamily. Homodimer.

The enzyme catalyses orotidine 5'-phosphate + H(+) = UMP + CO2. It participates in pyrimidine metabolism; UMP biosynthesis via de novo pathway; UMP from orotate: step 2/2. In terms of biological role, catalyzes the decarboxylation of orotidine 5'-monophosphate (OMP) to uridine 5'-monophosphate (UMP). The protein is Orotidine 5'-phosphate decarboxylase of Pseudomonas syringae pv. tomato (strain ATCC BAA-871 / DC3000).